A 251-amino-acid polypeptide reads, in one-letter code: ATP synthase delta chain, chloroplastic (251 aa).

Residues 1-64 (MASLQHTTAS…STGGALGARM (64 aa)) constitute a chloroplast transit peptide.

The protein belongs to the ATPase delta chain family. F-type ATPases have 2 components, CF(1) - the catalytic core - and CF(0) - the membrane proton channel. CF(1) has five subunits: alpha(3), beta(3), gamma(1), delta(1), epsilon(1). CF(0) has three main subunits: a, b and c.

It localises to the plastid. The protein localises to the chloroplast thylakoid membrane. Its function is as follows. This protein seems to be part of the stalk that links CF(0) to CF(1). It either transmits conformational changes from CF(0) into CF(1) or is implicated in proton conduction. This Pisum sativum (Garden pea) protein is ATP synthase delta chain, chloroplastic (ATPD).